Reading from the N-terminus, the 280-residue chain is Shikimate kinase (280 aa).

74–84 is a binding site for ATP; it reads PGGSGLGSSSA.

This sequence belongs to the GHMP kinase family. Archaeal shikimate kinase subfamily.

It is found in the cytoplasm. It catalyses the reaction shikimate + ATP = 3-phosphoshikimate + ADP + H(+). It participates in metabolic intermediate biosynthesis; chorismate biosynthesis; chorismate from D-erythrose 4-phosphate and phosphoenolpyruvate: step 5/7. The chain is Shikimate kinase (aroK) from Archaeoglobus fulgidus (strain ATCC 49558 / DSM 4304 / JCM 9628 / NBRC 100126 / VC-16).